The primary structure comprises 215 residues: Ribonuclease T (215 aa).

Residues 20–194 (VVIDVETAGF…YDTLQTAKLF (175 aa)) enclose the Exonuclease domain. Asp23, Glu25, His181, and Asp186 together coordinate Mg(2+). Residue His181 is the Proton donor/acceptor of the active site.

It belongs to the RNase T family. As to quaternary structure, homodimer. Mg(2+) serves as cofactor.

Its function is as follows. Trims short 3' overhangs of a variety of RNA species, leaving a one or two nucleotide 3' overhang. Responsible for the end-turnover of tRNA: specifically removes the terminal AMP residue from uncharged tRNA (tRNA-C-C-A). Also appears to be involved in tRNA biosynthesis. The chain is Ribonuclease T from Yersinia pseudotuberculosis serotype I (strain IP32953).